The primary structure comprises 633 residues: Phosphomethylpyrimidine synthase (633 aa).

Substrate is bound by residues N245, M274, Y303, H339, 359-361 (SRG), 400-403 (DGLR), and E439. H443 serves as a coordination point for Zn(2+). Residue Y466 participates in substrate binding. H507 lines the Zn(2+) pocket. Residues C587, C590, and C595 each coordinate [4Fe-4S] cluster.

The protein belongs to the ThiC family. Homodimer. It depends on [4Fe-4S] cluster as a cofactor.

The enzyme catalyses 5-amino-1-(5-phospho-beta-D-ribosyl)imidazole + S-adenosyl-L-methionine = 4-amino-2-methyl-5-(phosphooxymethyl)pyrimidine + CO + 5'-deoxyadenosine + formate + L-methionine + 3 H(+). Its pathway is cofactor biosynthesis; thiamine diphosphate biosynthesis. Catalyzes the synthesis of the hydroxymethylpyrimidine phosphate (HMP-P) moiety of thiamine from aminoimidazole ribotide (AIR) in a radical S-adenosyl-L-methionine (SAM)-dependent reaction. In Neisseria meningitidis serogroup B (strain ATCC BAA-335 / MC58), this protein is Phosphomethylpyrimidine synthase.